Here is a 101-residue protein sequence, read N- to C-terminus: Small ribosomal subunit protein uS14 (101 aa).

It belongs to the universal ribosomal protein uS14 family. Part of the 30S ribosomal subunit. Contacts proteins S3 and S10.

Functionally, binds 16S rRNA, required for the assembly of 30S particles and may also be responsible for determining the conformation of the 16S rRNA at the A site. This is Small ribosomal subunit protein uS14 from Shewanella frigidimarina (strain NCIMB 400).